We begin with the raw amino-acid sequence, 333 residues long: L-lactate dehydrogenase B chain (333 aa).

NAD(+) is bound by residues 29-57 (GQVG…WEDK) and R99. Substrate-binding residues include R106, N138, and R169. Residue N138 coordinates NAD(+). H193 (proton acceptor) is an active-site residue. T248 provides a ligand contact to substrate.

The protein belongs to the LDH/MDH superfamily. LDH family. Homotetramer.

It is found in the cytoplasm. The enzyme catalyses (S)-lactate + NAD(+) = pyruvate + NADH + H(+). Its pathway is fermentation; pyruvate fermentation to lactate; (S)-lactate from pyruvate: step 1/1. Functionally, interconverts simultaneously and stereospecifically pyruvate and lactate with concomitant interconversion of NADH and NAD(+). The sequence is that of L-lactate dehydrogenase B chain (LDHB) from Trachemys scripta elegans (Red-eared slider turtle).